The chain runs to 363 residues: Cytochrome b (363 aa).

Helical transmembrane passes span 23 to 43 (VGFI…LLTF), 67 to 89 (WFVR…IHII), 102 to 122 (SWYS…TGYV), and 164 to 184 (FFIL…LHLY). Residues His73 and His87 each coordinate heme b. Heme b-binding residues include His168 and His182. His187 serves as a coordination point for a ubiquinone. The next 4 helical transmembrane spans lie at 210–230 (ILFS…PQVG), 271–291 (VFPT…LLII), 309–329 (RVWT…GCIG), and 332–352 (VINL…TTFV).

It belongs to the cytochrome b family. As to quaternary structure, the main subunits of complex b-c1 are: cytochrome b, cytochrome c1 and the Rieske protein. Heme b is required as a cofactor.

The protein localises to the mitochondrion inner membrane. In terms of biological role, component of the ubiquinol-cytochrome c reductase complex (complex III or cytochrome b-c1 complex) that is part of the mitochondrial respiratory chain. The b-c1 complex mediates electron transfer from ubiquinol to cytochrome c. Contributes to the generation of a proton gradient across the mitochondrial membrane that is then used for ATP synthesis. The chain is Cytochrome b (MT-CYB) from Theileria parva (East coast fever infection agent).